A 571-amino-acid polypeptide reads, in one-letter code: Putative clathrin assembly protein At2g01600 (571 aa).

One can recognise an ENTH domain in the interval 24–161; the sequence is RVNSEYADLD…ECFRVLKYDT (138 aa). 2 disordered regions span residues 325 to 346 and 474 to 571; these read YRPD…REML and PAPN…TGLI. Over residues 337-346 the composition is skewed to basic and acidic residues; it reads EPSHEEREML. Positions 508–522 are enriched in low complexity; it reads QQTYQHQPQPTYQHQ. Composition is skewed to polar residues over residues 523 to 532 and 543 to 571; these read SNPPTNNSNP and PVSQ…TGLI.

The protein resides in the membrane. It is found in the clathrin-coated pit. It localises to the golgi apparatus. The protein localises to the cytoplasmic vesicle. Its subcellular location is the clathrin-coated vesicle. In Arabidopsis thaliana (Mouse-ear cress), this protein is Putative clathrin assembly protein At2g01600.